The chain runs to 457 residues: Bifunctional protein GlmU (457 aa).

The pyrophosphorylase stretch occupies residues 1–229 (MYNCAIILAA…YEEIMGVNSR (229 aa)). UDP-N-acetyl-alpha-D-glucosamine-binding positions include 8–11 (LAAG), Lys-22, Gln-73, and 78–79 (GT). Residue Asp-103 coordinates Mg(2+). Positions 140, 155, 170, and 227 each coordinate UDP-N-acetyl-alpha-D-glucosamine. Mg(2+) is bound at residue Asn-227. Positions 230 to 250 (VQLSEAEIVMRKRINHKHMVN) are linker. The tract at residues 251 to 457 (GVTFIDCEST…WLDKKGLLKK (207 aa)) is N-acetyltransferase. Arg-332 and Lys-350 together coordinate UDP-N-acetyl-alpha-D-glucosamine. His-362 (proton acceptor) is an active-site residue. UDP-N-acetyl-alpha-D-glucosamine is bound by residues Tyr-365 and Asn-376. Residues 385 to 386 (NY), Ala-422, and Arg-439 each bind acetyl-CoA.

It in the N-terminal section; belongs to the N-acetylglucosamine-1-phosphate uridyltransferase family. This sequence in the C-terminal section; belongs to the transferase hexapeptide repeat family. In terms of assembly, homotrimer. Mg(2+) is required as a cofactor.

It localises to the cytoplasm. It catalyses the reaction alpha-D-glucosamine 1-phosphate + acetyl-CoA = N-acetyl-alpha-D-glucosamine 1-phosphate + CoA + H(+). The catalysed reaction is N-acetyl-alpha-D-glucosamine 1-phosphate + UTP + H(+) = UDP-N-acetyl-alpha-D-glucosamine + diphosphate. It participates in nucleotide-sugar biosynthesis; UDP-N-acetyl-alpha-D-glucosamine biosynthesis; N-acetyl-alpha-D-glucosamine 1-phosphate from alpha-D-glucosamine 6-phosphate (route II): step 2/2. Its pathway is nucleotide-sugar biosynthesis; UDP-N-acetyl-alpha-D-glucosamine biosynthesis; UDP-N-acetyl-alpha-D-glucosamine from N-acetyl-alpha-D-glucosamine 1-phosphate: step 1/1. It functions in the pathway bacterial outer membrane biogenesis; LPS lipid A biosynthesis. In terms of biological role, catalyzes the last two sequential reactions in the de novo biosynthetic pathway for UDP-N-acetylglucosamine (UDP-GlcNAc). The C-terminal domain catalyzes the transfer of acetyl group from acetyl coenzyme A to glucosamine-1-phosphate (GlcN-1-P) to produce N-acetylglucosamine-1-phosphate (GlcNAc-1-P), which is converted into UDP-GlcNAc by the transfer of uridine 5-monophosphate (from uridine 5-triphosphate), a reaction catalyzed by the N-terminal domain. The chain is Bifunctional protein GlmU from Clostridium botulinum (strain Kyoto / Type A2).